The following is a 534-amino-acid chain: H(+)/hexose cotransporter 1 (534 aa).

At methionine 1–glycine 21 the chain is on the cytoplasmic side. The chain crosses the membrane as a helical span at residues glycine 22–glycine 42. At tyrosine 43 to glutamine 87 the chain is on the extracellular side. A helical transmembrane segment spans residues leucine 88–threonine 108. The Cytoplasmic portion of the chain corresponds to arginine 109 to lysine 114. A helical membrane pass occupies residues valine 115–glutamine 135. Topologically, residues aspartate 136 to arginine 144 are extracellular. Residues valine 145 to valine 165 traverse the membrane as a helical segment. Topologically, residues alanine 166–methionine 173 are cytoplasmic. A helical membrane pass occupies residues leucine 174–tyrosine 194. The Extracellular portion of the chain corresponds to alanine 195 to arginine 204. A helical transmembrane segment spans residues leucine 205 to proline 225. The Cytoplasmic portion of the chain corresponds to glutamate 226–glutamine 299. The helical transmembrane segment at phenylalanine 300 to serine 322 threads the bilayer. The Extracellular portion of the chain corresponds to alanine 323–threonine 328. A helical transmembrane segment spans residues valine 329–phenylalanine 349. Topologically, residues glycine 350–arginine 352 are cytoplasmic. A helical membrane pass occupies residues phenylalanine 353 to leucine 373. Residues alanine 374–lysine 387 lie on the Extracellular side of the membrane. The chain crosses the membrane as a helical span at residues alanine 388 to tryptophan 408. At glycine 409–valine 433 the chain is on the cytoplasmic side. The helical transmembrane segment at valine 434–methionine 454 threads the bilayer. The Extracellular segment spans residues glutamate 455–tyrosine 456. The helical transmembrane segment at glycine 457 to leucine 477 threads the bilayer. Over proline 478–lysine 534 the chain is Cytoplasmic.

It belongs to the major facilitator superfamily. Sugar transporter (TC 2.A.1.1) family.

It localises to the membrane. Active uptake of hexoses. The polypeptide is H(+)/hexose cotransporter 1 (HUP1) (Parachlorella kessleri (Green alga)).